The chain runs to 178 residues: MSEHKGPTGAMVDPESLPYRPCVGLMVLNKAGLVWAGRRIVIPGDEMDGATQLWQMPQGGIDKGEDPAQAALRELYEETGMTSVSLLEEASDWINYDLPPHLMGLALKGKYRGQTQKWFAYRFEGDESEIAINPPPGGHTAEFDCWEWKPMADLPNLIVPFKRKVYEQVVATFRHLAA.

Residues 18–171 (PYRPCVGLMV…KRKVYEQVVA (154 aa)) enclose the Nudix hydrolase domain. A Nudix box motif is present at residues 59-80 (GGIDKGEDPAQAALRELYEETG).

This sequence belongs to the Nudix hydrolase family. RppH subfamily. The cofactor is a divalent metal cation.

Functionally, accelerates the degradation of transcripts by removing pyrophosphate from the 5'-end of triphosphorylated RNA, leading to a more labile monophosphorylated state that can stimulate subsequent ribonuclease cleavage. In Brucella abortus (strain 2308), this protein is RNA pyrophosphohydrolase.